Consider the following 580-residue polypeptide: 2-succinyl-5-enolpyruvyl-6-hydroxy-3-cyclohexene-1-carboxylate synthase (580 aa).

The interval 178–199 (LEPTPMPGDLTEPPAAAQPRDD) is disordered.

Belongs to the TPP enzyme family. MenD subfamily. In terms of assembly, homodimer. It depends on Mg(2+) as a cofactor. Mn(2+) is required as a cofactor. The cofactor is thiamine diphosphate.

The enzyme catalyses isochorismate + 2-oxoglutarate + H(+) = 5-enolpyruvoyl-6-hydroxy-2-succinyl-cyclohex-3-ene-1-carboxylate + CO2. It functions in the pathway quinol/quinone metabolism; 1,4-dihydroxy-2-naphthoate biosynthesis; 1,4-dihydroxy-2-naphthoate from chorismate: step 2/7. The protein operates within quinol/quinone metabolism; menaquinone biosynthesis. Its function is as follows. Catalyzes the thiamine diphosphate-dependent decarboxylation of 2-oxoglutarate and the subsequent addition of the resulting succinic semialdehyde-thiamine pyrophosphate anion to isochorismate to yield 2-succinyl-5-enolpyruvyl-6-hydroxy-3-cyclohexene-1-carboxylate (SEPHCHC). The sequence is that of 2-succinyl-5-enolpyruvyl-6-hydroxy-3-cyclohexene-1-carboxylate synthase from Roseiflexus castenholzii (strain DSM 13941 / HLO8).